The chain runs to 334 residues: Holliday junction branch migration complex subunit RuvB (334 aa).

The segment at 1-182 (MNERMVDQSM…FGVHLRLEYY (182 aa)) is large ATPase domain (RuvB-L). Residues leucine 21, arginine 22, glycine 63, lysine 66, threonine 67, threonine 68, 129 to 131 (EDF), arginine 172, tyrosine 182, and arginine 219 contribute to the ATP site. Threonine 67 is a Mg(2+) binding site. The small ATPAse domain (RuvB-S) stretch occupies residues 183–253 (NESDLKEIII…TTKHALGLLQ (71 aa)). The tract at residues 256–334 (QHGLDYIDHK…HFAKSNEERE (79 aa)) is head domain (RuvB-H). Residues arginine 292, arginine 311, and arginine 316 each contribute to the DNA site.

This sequence belongs to the RuvB family. Homohexamer. Forms an RuvA(8)-RuvB(12)-Holliday junction (HJ) complex. HJ DNA is sandwiched between 2 RuvA tetramers; dsDNA enters through RuvA and exits via RuvB. An RuvB hexamer assembles on each DNA strand where it exits the tetramer. Each RuvB hexamer is contacted by two RuvA subunits (via domain III) on 2 adjacent RuvB subunits; this complex drives branch migration. In the full resolvosome a probable DNA-RuvA(4)-RuvB(12)-RuvC(2) complex forms which resolves the HJ.

It localises to the cytoplasm. The enzyme catalyses ATP + H2O = ADP + phosphate + H(+). Its function is as follows. The RuvA-RuvB-RuvC complex processes Holliday junction (HJ) DNA during genetic recombination and DNA repair, while the RuvA-RuvB complex plays an important role in the rescue of blocked DNA replication forks via replication fork reversal (RFR). RuvA specifically binds to HJ cruciform DNA, conferring on it an open structure. The RuvB hexamer acts as an ATP-dependent pump, pulling dsDNA into and through the RuvAB complex. RuvB forms 2 homohexamers on either side of HJ DNA bound by 1 or 2 RuvA tetramers; 4 subunits per hexamer contact DNA at a time. Coordinated motions by a converter formed by DNA-disengaged RuvB subunits stimulates ATP hydrolysis and nucleotide exchange. Immobilization of the converter enables RuvB to convert the ATP-contained energy into a lever motion, pulling 2 nucleotides of DNA out of the RuvA tetramer per ATP hydrolyzed, thus driving DNA branch migration. The RuvB motors rotate together with the DNA substrate, which together with the progressing nucleotide cycle form the mechanistic basis for DNA recombination by continuous HJ branch migration. Branch migration allows RuvC to scan DNA until it finds its consensus sequence, where it cleaves and resolves cruciform DNA. The sequence is that of Holliday junction branch migration complex subunit RuvB from Staphylococcus aureus (strain MRSA252).